A 130-amino-acid chain; its full sequence is Small ribosomal subunit protein bS16 (130 aa).

Positions 80-130 (AGHTPKKERANMKKAQPGKKAVERAEEKAAKASAAAEAPAEAPAAEAAAEE) are disordered. The span at 99–109 (KAVERAEEKAA) shows a compositional bias: basic and acidic residues. Residues 110 to 130 (KASAAAEAPAEAPAAEAAAEE) show a composition bias toward low complexity.

It belongs to the bacterial ribosomal protein bS16 family.

The chain is Small ribosomal subunit protein bS16 from Jannaschia sp. (strain CCS1).